Consider the following 637-residue polypeptide: Penicillin-binding protein 1A (637 aa).

The interval 62 to 224 (LIADLGSERR…NQYDPYSHPE (163 aa)) is transglycosylase. Residue Glu91 is the Proton donor; for transglycosylase activity of the active site. A transpeptidase region spans residues 298–612 (EVYTNVDSKV…RLTPIVGDGF (315 aa)). The Acyl-ester intermediate; for transpeptidase activity role is filled by Ser371.

The protein in the N-terminal section; belongs to the glycosyltransferase 51 family. This sequence in the C-terminal section; belongs to the transpeptidase family.

It is found in the secreted. It carries out the reaction [GlcNAc-(1-&gt;4)-Mur2Ac(oyl-L-Ala-gamma-D-Glu-L-Lys-D-Ala-D-Ala)](n)-di-trans,octa-cis-undecaprenyl diphosphate + beta-D-GlcNAc-(1-&gt;4)-Mur2Ac(oyl-L-Ala-gamma-D-Glu-L-Lys-D-Ala-D-Ala)-di-trans,octa-cis-undecaprenyl diphosphate = [GlcNAc-(1-&gt;4)-Mur2Ac(oyl-L-Ala-gamma-D-Glu-L-Lys-D-Ala-D-Ala)](n+1)-di-trans,octa-cis-undecaprenyl diphosphate + di-trans,octa-cis-undecaprenyl diphosphate + H(+). The catalysed reaction is Preferential cleavage: (Ac)2-L-Lys-D-Ala-|-D-Ala. Also transpeptidation of peptidyl-alanyl moieties that are N-acyl substituents of D-alanine.. It participates in cell wall biogenesis; peptidoglycan biosynthesis. Cell wall formation. The polypeptide is Penicillin-binding protein 1A (ponA) (Streptococcus oralis).